The following is a 437-amino-acid chain: MKVYIETMGCAMNSRDSEHLLSELSKLDYKETNDPKIADLILINTCSVREKPERKLFSEIGQFAKIKKPNAKIGVCGCTASHMGADILKKAPSVSFVLGARNVSKISQVIHKEKAVEVAIDYDESAYAFEFFEKKAQIRSLLNISIGCDKKCAYCIVPHTRGKEISIPMDLILKEAEKLANNGTKELMLLGQNVNNYGVRFSSEHAKVDFSDLLDKLSEIQGIERIRFTSPHPLHMNDGFLERFAKNPKVCKSIHMPLQSGSSAVLKMMRRGYSKEWFLNRVERLKALVPEVGISTDIIVGFPNESDKDFEDTMEVLEKVRFDTLYSFIYSPRPFTEAGAWKERVPLEVSYSRLERLQNRHKEILEEKAKLEVGKTHVVLVENRREMDNQIVGFEGRSDTGKFIEVTCKEKRNPGELVKVEIISHSKGRLIAAIKGN.

The 115-residue stretch at 1 to 115 (MKVYIETMGC…ISQVIHKEKA (115 aa)) folds into the MTTase N-terminal domain. 6 residues coordinate [4Fe-4S] cluster: Cys10, Cys46, Cys78, Cys148, Cys152, and Cys155. Positions 134–367 (KKAQIRSLLN…QNRHKEILEE (234 aa)) constitute a Radical SAM core domain. Positions 370-436 (KLEVGKTHVV…KGRLIAAIKG (67 aa)) constitute a TRAM domain.

The protein belongs to the methylthiotransferase family. MiaB subfamily. In terms of assembly, monomer. The cofactor is [4Fe-4S] cluster.

Its subcellular location is the cytoplasm. The enzyme catalyses N(6)-dimethylallyladenosine(37) in tRNA + (sulfur carrier)-SH + AH2 + 2 S-adenosyl-L-methionine = 2-methylsulfanyl-N(6)-dimethylallyladenosine(37) in tRNA + (sulfur carrier)-H + 5'-deoxyadenosine + L-methionine + A + S-adenosyl-L-homocysteine + 2 H(+). In terms of biological role, catalyzes the methylthiolation of N6-(dimethylallyl)adenosine (i(6)A), leading to the formation of 2-methylthio-N6-(dimethylallyl)adenosine (ms(2)i(6)A) at position 37 in tRNAs that read codons beginning with uridine. In Helicobacter pylori (strain HPAG1), this protein is tRNA-2-methylthio-N(6)-dimethylallyladenosine synthase.